The chain runs to 411 residues: MVAFWTCRNAWFQHLPFAKRGDENAPSGPRRLRPWFLVLALGLAACSEDKSAPQQAAPLPPIPVGVIKITERPTHPQLSFVGRVEATDSVDLIARVDGFLDKRTFTEGQAVKTGDLLFVLQKDALQAALDAAQANLAKAQADADNLKLQTERARSLYKQKTVSQAMLDDRVAAEKQALAVVQQAQASLEQAQINLGYTDIRAPFSGRIGMANFSVGALVGPSSGPLATIVSQDPIYVTFPVSDKTILDLTEGGRTATDRSNVAVSLTLSNGMTYPQTGAIDFTGIKINPNTDTLMVRAQFPNPNNVLIDGQYVQVTAASKHPVEALLVPQKAIMTDQSGNYVLAVGEDNKVIQRQITQGSTFGSNVVVKSGLAVGDQVVVDGLQRIRPGQKVDPQIVDATTPAQKAMSVGN.

A coiled-coil region spans residues 118–196; that stretch reads FVLQKDALQA…SLEQAQINLG (79 aa).

Belongs to the membrane fusion protein (MFP) (TC 8.A.1) family. Probably part of a tripartite efflux pump, which is composed of an outer membrane efflux protein, an inner membrane protein and a protein that expands the periplasmic space. Could form a tripartite pump with BepC and BepG.

It is found in the periplasm. In terms of biological role, may contribute to resistance to some drugs, such as deoxycholate, sodium dodecyl sulfate and nalidixic acid, in the absence of BepD and BepE. The polypeptide is Efflux pump periplasmic linker BepF (bepF) (Brucella suis biovar 1 (strain 1330)).